The following is a 1054-amino-acid chain: Translation initiation factor IF-2 (1054 aa).

4 disordered regions span residues 57–213, 225–248, 287–315, and 401–436; these read DKRK…AASC, DPLALNSSPQSSAAFCPDARNPGD, SGRPRAASRRTAVQRPSGRAGAGASHGLQ, and DHAGRGRELVDVSKNKDKSPRKRGGPNDTSISKQEL. The segment covering 92 to 104 has biased composition (polar residues); sequence QEPSQAASDVSSP. Positions 111-213 are enriched in low complexity; it reads EASGAEAAAS…VTSGRRAASC (103 aa). Positions 401–418 are enriched in basic and acidic residues; it reads DHAGRGRELVDVSKNKDK. A tr-type G domain is found at 552 to 721; the sequence is TRPPVVTVMG…VLQAEVLELT (170 aa). A G1 region spans residues 561-568; sequence GHVDHGKT. 561–568 serves as a coordination point for GTP; sequence GHVDHGKT. The interval 586-590 is G2; it reads GITQH. Residues 607–610 form a G3 region; sequence DTPG. Residues 607–611 and 661–664 each bind GTP; these read DTPGH and NKMD. The G4 stretch occupies residues 661–664; the sequence is NKMD. Residues 697–699 are G5; it reads SAK.

The protein belongs to the TRAFAC class translation factor GTPase superfamily. Classic translation factor GTPase family. IF-2 subfamily.

It localises to the cytoplasm. One of the essential components for the initiation of protein synthesis. Protects formylmethionyl-tRNA from spontaneous hydrolysis and promotes its binding to the 30S ribosomal subunits. Also involved in the hydrolysis of GTP during the formation of the 70S ribosomal complex. The protein is Translation initiation factor IF-2 (infB) of Stigmatella aurantiaca.